The chain runs to 412 residues: Putative gustatory receptor 58c (412 aa).

2 helical membrane-spanning segments follow: residues 39–59 (VVYC…ALFV) and 72–92 (MFGV…LFLM). The N-linked (GlcNAc...) asparagine glycan is linked to N158. Residues 173–193 (IVYALIMILLMSYVDMTVYMV) traverse the membrane as a helical segment. N203 carries an N-linked (GlcNAc...) asparagine glycan. Transmembrane regions (helical) follow at residues 224-241 (IPRE…RKLW), 262-282 (VLFN…RLWI), and 296-316 (ILYA…FSIF). 3 N-linked (GlcNAc...) asparagine glycosylation sites follow: N337, N386, and N391.

It belongs to the insect chemoreceptor superfamily. Gustatory receptor (GR) family. Gr10a subfamily.

The protein resides in the cell membrane. Functionally, probable gustatory receptor which mediates acceptance or avoidance behavior, depending on its substrates. This is Putative gustatory receptor 58c (Gr58c) from Drosophila melanogaster (Fruit fly).